The following is a 176-amino-acid chain: Inner membrane-spanning protein YciB (176 aa).

The next 6 helical transmembrane spans lie at 3–23, 24–44, 49–69, 81–101, 119–139, and 149–169; these read FLFDLFPIILFFAAFKVWGIF, TATAVAIVATLAQVAWVAFRH, TMLWVSLGVIVVFGGATLVLH, LYWLFAIGLLAARYAFGNNLI, LNVAWALFFAVLGVANLYVVH, and FKLFGTTGAMVVFIILQSLWL.

It belongs to the YciB family.

It localises to the cell inner membrane. In terms of biological role, plays a role in cell envelope biogenesis, maintenance of cell envelope integrity and membrane homeostasis. The protein is Inner membrane-spanning protein YciB of Burkholderia ambifaria (strain MC40-6).